We begin with the raw amino-acid sequence, 491 residues long: UDP-N-acetylmuramate--L-alanine ligase (491 aa).

An ATP-binding site is contributed by glycine 126 to threonine 132.

It belongs to the MurCDEF family.

It is found in the cytoplasm. The catalysed reaction is UDP-N-acetyl-alpha-D-muramate + L-alanine + ATP = UDP-N-acetyl-alpha-D-muramoyl-L-alanine + ADP + phosphate + H(+). It participates in cell wall biogenesis; peptidoglycan biosynthesis. In terms of biological role, cell wall formation. The polypeptide is UDP-N-acetylmuramate--L-alanine ligase (Salmonella gallinarum (strain 287/91 / NCTC 13346)).